Reading from the N-terminus, the 426-residue chain is Serine--tRNA ligase (426 aa).

Residues 103 to 129 (VPNLPDDSVPTGKDENDNPEIRRWGTP) form a disordered region. Residues 114–125 (GKDENDNPEIRR) show a composition bias toward basic and acidic residues. 230–232 (TAE) is an L-serine binding site. Position 261 to 263 (261 to 263 (RSE)) interacts with ATP. Residue glutamate 284 participates in L-serine binding. An ATP-binding site is contributed by 348–351 (EISS). Serine 384 contacts L-serine.

This sequence belongs to the class-II aminoacyl-tRNA synthetase family. Type-1 seryl-tRNA synthetase subfamily. As to quaternary structure, homodimer. The tRNA molecule binds across the dimer.

The protein resides in the cytoplasm. It carries out the reaction tRNA(Ser) + L-serine + ATP = L-seryl-tRNA(Ser) + AMP + diphosphate + H(+). It catalyses the reaction tRNA(Sec) + L-serine + ATP = L-seryl-tRNA(Sec) + AMP + diphosphate + H(+). Its pathway is aminoacyl-tRNA biosynthesis; selenocysteinyl-tRNA(Sec) biosynthesis; L-seryl-tRNA(Sec) from L-serine and tRNA(Sec): step 1/1. Its function is as follows. Catalyzes the attachment of serine to tRNA(Ser). Is also able to aminoacylate tRNA(Sec) with serine, to form the misacylated tRNA L-seryl-tRNA(Sec), which will be further converted into selenocysteinyl-tRNA(Sec). This is Serine--tRNA ligase from Dichelobacter nodosus (strain VCS1703A).